A 580-amino-acid chain; its full sequence is Tripeptidyl-peptidase sed5 (580 aa).

A disordered region spans residues 1–21 (MYPLDGSARPHPPGTTRLNSV). In terms of domain architecture, Peptidase S53 spans 181-567 (RAQRLIVAEL…RRTLEELRRI (387 aa)). The N-linked (GlcNAc...) asparagine glycan is linked to Asn-236. Residues Glu-269, Asp-273, and Ser-479 each act as charge relay system in the active site. Positions 523 and 524 each coordinate Ca(2+). A glycan (N-linked (GlcNAc...) asparagine) is linked at Asn-529. Ca(2+)-binding residues include Gly-543, Gly-545, and Asp-547.

It depends on Ca(2+) as a cofactor.

It localises to the secreted. The protein resides in the extracellular space. The enzyme catalyses Release of an N-terminal tripeptide from a polypeptide.. Secreted tripeptidyl-peptidase which degrades proteins at acidic pHs and is involved in virulence. This is Tripeptidyl-peptidase sed5 (sed5) from Aspergillus fumigatus (strain ATCC MYA-4609 / CBS 101355 / FGSC A1100 / Af293) (Neosartorya fumigata).